We begin with the raw amino-acid sequence, 3068 residues long: Genome polyprotein (3068 aa).

The Peptidase S30 domain occupies 144 to 287 (TFRDGHMNKF…MATVTHMEQY (144 aa)). Residues His-195, Asp-204, and Ser-238 each act as for P1 proteinase activity in the active site. The Involved in interaction with stylet and aphid transmission signature appears at 337 to 340 (KLTC). An Involved in virions binding and aphid transmission motif is present at residues 595–597 (PTK). In terms of domain architecture, Peptidase C6 spans 621–743 (LYIALDGYCY…ESEIKHYRVG (123 aa)). Residues Cys-629 and His-702 each act as for helper component proteinase activity in the active site. The Helicase ATP-binding domain maps to 1228-1380 (DISISSERDF…TQFPVKLVVE (153 aa)). 1241–1248 (GAVGSGKS) contributes to the ATP binding site. The short motif at 1330-1333 (DECH) is the DECH box element. In terms of domain architecture, Helicase C-terminal spans 1399 to 1558 (DMIQYGNNLL…NLPVMSSGVS (160 aa)). The Nuclear localization signal motif lies at 1884–1891 (KKGKGKGT). Tyr-1906 carries the O-(5'-phospho-RNA)-tyrosine modification. The region spanning 2031–2249 (AKTLMRGLRD…VLWGPLQLTK (219 aa)) is the Peptidase C4 domain. Residues His-2076, Asp-2111, and Cys-2181 each act as for nuclear inclusion protein A activity in the active site. Residues 2518-2642 (WIYCDADGSQ…AVNPERESLL (125 aa)) form the RdRp catalytic domain. The disordered stretch occupies residues 2796–2833 (SSSRSDTLDAGEEKKKNKEVATVSDGMGKKEVESTRDS). The segment covering 2822 to 2833 (MGKKEVESTRDS) has biased composition (basic and acidic residues). Thr-3051 carries the post-translational modification Phosphothreonine.

Belongs to the potyviridae genome polyprotein family. Interacts with host eIF4E protein (via cap-binding region); this interaction mediates the translation of the VPg-viral RNA conjugates. Part of a complex that comprises VPg, RNA, host EIF4E and EIF4G; this interaction mediates the translation of the VPg-viral RNA conjugates. VPg is uridylylated by the polymerase and is covalently attached to the 5'-end of the genomic RNA. This uridylylated form acts as a nucleotide-peptide primer for the polymerase. Post-translationally, potyviral RNA is expressed as two polyproteins which undergo post-translational proteolytic processing. Genome polyprotein is processed by NIa-pro, P1 and HC-pro proteinases resulting in the production of at least ten individual proteins. P3N-PIPO polyprotein is cleaved by P1 and HC-pro proteinases resulting in the production of three individual proteins. The P1 proteinase and the HC-pro cleave only their respective C-termini autocatalytically. 6K1 is essential for proper proteolytic separation of P3 from CI.

The protein localises to the host cytoplasmic vesicle. It localises to the host nucleus. It is found in the virion. It carries out the reaction RNA(n) + a ribonucleoside 5'-triphosphate = RNA(n+1) + diphosphate. It catalyses the reaction Hydrolyzes glutaminyl bonds, and activity is further restricted by preferences for the amino acids in P6 - P1' that vary with the species of potyvirus, e.g. Glu-Xaa-Xaa-Tyr-Xaa-Gln-|-(Ser or Gly) for the enzyme from tobacco etch virus. The natural substrate is the viral polyprotein, but other proteins and oligopeptides containing the appropriate consensus sequence are also cleaved.. The enzyme catalyses Hydrolyzes a Gly-|-Gly bond at its own C-terminus, commonly in the sequence -Tyr-Xaa-Val-Gly-|-Gly, in the processing of the potyviral polyprotein.. In terms of biological role, required for aphid transmission and also has proteolytic activity. Only cleaves a Gly-Gly dipeptide at its own C-terminus. Interacts with virions and aphid stylets. Acts as a suppressor of RNA-mediated gene silencing, also known as post-transcriptional gene silencing (PTGS), a mechanism of plant viral defense that limits the accumulation of viral RNAs. May have RNA-binding activity. Its function is as follows. Has helicase activity. It may be involved in replication. Functionally, indispensable for virus replication. Reduces the abundance of host transcripts related to jasmonic acid biosynthesis therefore altering the host defenses. In order to increase its own stability, decreases host protein degradation pathways. Indispensable for virus replication. In terms of biological role, mediates the cap-independent, EIF4E-dependent translation of viral genomic RNAs. Binds to the cap-binding site of host EIF4E and thus interferes with the host EIF4E-dependent mRNA export and translation. VPg-RNA directly binds EIF4E and is a template for transcription. Also forms trimeric complexes with EIF4E-EIF4G, which are templates for translation. Its function is as follows. Has RNA-binding and proteolytic activities. Functionally, an RNA-dependent RNA polymerase that plays an essential role in the virus replication. Involved in aphid transmission, cell-to-cell and systemis movement, encapsidation of the viral RNA and in the regulation of viral RNA amplification. This chain is Genome polyprotein, found in Pepper mottle virus (isolate California) (PeMV).